The primary structure comprises 145 residues: 3-hydroxyacyl-[acyl-carrier-protein] dehydratase FabZ (145 aa).

The active site involves His49.

The protein belongs to the thioester dehydratase family. FabZ subfamily.

It is found in the cytoplasm. It catalyses the reaction a (3R)-hydroxyacyl-[ACP] = a (2E)-enoyl-[ACP] + H2O. Its function is as follows. Involved in unsaturated fatty acids biosynthesis. Catalyzes the dehydration of short chain beta-hydroxyacyl-ACPs and long chain saturated and unsaturated beta-hydroxyacyl-ACPs. This is 3-hydroxyacyl-[acyl-carrier-protein] dehydratase FabZ from Rickettsia bellii (strain RML369-C).